A 376-amino-acid polypeptide reads, in one-letter code: Delta(12) fatty acid desaturase fat-2 (376 aa).

The next 4 helical transmembrane spans lie at 45–65 (ISYLIKDYVLLAGLYFAVPYI), 69–89 (LGWIGLLGWYWAMGIVGSALF), 203–223 (VKCAVSGVACAICAYIAFVLC), and 228–248 (YTFVKYYYIPLLFQGLILVII).

Belongs to the fatty acid desaturase type 1 family.

It is found in the membrane. It catalyses the reaction (9Z)-octadecenoyl-CoA + 2 Fe(II)-[cytochrome b5] + O2 + 2 H(+) = (9Z,12Z)-octadecadienoyl-CoA + 2 Fe(III)-[cytochrome b5] + 2 H2O. The enzyme catalyses (9Z)-hexadecenoyl-CoA + 2 Fe(II)-[cytochrome b5] + O2 + 2 H(+) = (9Z,12Z)-hexadecadienoyl-CoA + 2 Fe(III)-[cytochrome b5] + 2 H2O. The catalysed reaction is (9Z,12Z)-octadecadienoyl-CoA + 2 Fe(II)-[cytochrome b5] + O2 + 2 H(+) = (9Z,12Z,15Z)-octadecatrienoyl-CoA + 2 Fe(III)-[cytochrome b5] + 2 H2O. It carries out the reaction (9Z)-heptadecenoyl-CoA + 2 Fe(II)-[cytochrome b5] + O2 + 2 H(+) = (9Z,12Z)-heptadecadienoyl-CoA + 2 Fe(III)-[cytochrome b5] + 2 H2O. It catalyses the reaction (9Z)-pentadecenoyl-CoA + 2 Fe(II)-[cytochrome b5] + O2 + 2 H(+) = (9Z,12Z)-pentadecadienoyl-CoA + 2 Fe(III)-[cytochrome b5] + 2 H2O. The enzyme catalyses (6Z,9Z,12Z)-octadecatrienoyl-CoA + 2 Fe(II)-[cytochrome b5] + O2 + 2 H(+) = (6Z,9Z,12Z,15Z)-octadecatetraenoyl-CoA + 2 Fe(III)-[cytochrome b5] + 2 H2O. The catalysed reaction is (9Z)-tetradecenoyl-CoA + 2 Fe(II)-[cytochrome b5] + O2 + 2 H(+) = (9Z,12Z)-tetradecadienoyl-CoA + 2 Fe(III)-[cytochrome b5] + 2 H2O. It participates in lipid metabolism; polyunsaturated fatty acid biosynthesis. Functionally, can function as a Delta(12)/Delta(15) bifunctional desaturase and behaves as a nu +3' desaturase. Introduces a double bond in the fatty acid chain three carbons away from an existing double bond to biosynthesize polyunsaturated fatty acids (PUFAs) endogenously (PUFAs are essential for membrane structure and many cellular and physiological processes). Acts on a number of substrates like oleoyl-CoA ((9Z)-octadecenoyl-CoA, 18:1n-9), palmitoleoyl-CoA ((9Z)-hexadecenoyl-CoA, 16:1n-7), and gamma-linolenoyl-CoA ((6Z,9Z,12Z)-octadecatrienoyl-CoA, 18:3n-6), to generate linoleoyl-CoA ((9Z,12Z)-octadecadienoyl-CoA, 18:2n-6), (9Z,12Z)-hexadecadienoyl-CoA (16:2n-4) and (6Z,9Z,12Z,15Z)-octadecatetraenoyl-CoA (18:4n-3) respectively. Unlike plants, Caenorhabditis elegans desaturases seem to use fatty acyl-CoAs as substrates. In Caenorhabditis elegans, this protein is Delta(12) fatty acid desaturase fat-2 (fat-2).